Reading from the N-terminus, the 612-residue chain is Dihydroxy-acid dehydratase (612 aa).

Mg(2+) is bound at residue D81. C122 contributes to the [2Fe-2S] cluster binding site. Mg(2+)-binding residues include D123 and K124. K124 carries the N6-carboxylysine modification. C193 provides a ligand contact to [2Fe-2S] cluster. A Mg(2+)-binding site is contributed by E489. Residue S515 is the Proton acceptor of the active site.

It belongs to the IlvD/Edd family. As to quaternary structure, homodimer. It depends on [2Fe-2S] cluster as a cofactor. Requires Mg(2+) as cofactor.

It catalyses the reaction (2R)-2,3-dihydroxy-3-methylbutanoate = 3-methyl-2-oxobutanoate + H2O. The enzyme catalyses (2R,3R)-2,3-dihydroxy-3-methylpentanoate = (S)-3-methyl-2-oxopentanoate + H2O. It functions in the pathway amino-acid biosynthesis; L-isoleucine biosynthesis; L-isoleucine from 2-oxobutanoate: step 3/4. The protein operates within amino-acid biosynthesis; L-valine biosynthesis; L-valine from pyruvate: step 3/4. In terms of biological role, functions in the biosynthesis of branched-chain amino acids. Catalyzes the dehydration of (2R,3R)-2,3-dihydroxy-3-methylpentanoate (2,3-dihydroxy-3-methylvalerate) into 2-oxo-3-methylpentanoate (2-oxo-3-methylvalerate) and of (2R)-2,3-dihydroxy-3-methylbutanoate (2,3-dihydroxyisovalerate) into 2-oxo-3-methylbutanoate (2-oxoisovalerate), the penultimate precursor to L-isoleucine and L-valine, respectively. The chain is Dihydroxy-acid dehydratase from Stutzerimonas stutzeri (strain A1501) (Pseudomonas stutzeri).